The sequence spans 728 residues: MSTEAKCPVTGGATRSSSAGIQSNADWWPNQINLGMLHQHSALSNPMDPDFDYAAEFKTLDLDAVIADLKALMTDSQDWWPADFGHYGPLFVRMAWHAAGTYRIGDGRGGAGAGQQRFAPLNSWPDNANLDKARRLLWPVKQKYGRKISWADLMVLAGNVALESMGFKTFGFGAGRVDTWEPDQGIYWGPETTWLDDKRYSGDRDLENPLAAVQMGLIYVNPEGPNGKPDPVAAARDIRETFARMAMNDEETVALIAGGHTFGKTHGAGDAALVGPEPEAAPIEQQGLGWISSYGTGKGSDAITGGPEVTWTQTPTQWSNFYFDNLFNYEWELTKSPAGAWQWVAKDAGDVIPDAFDAAKKHRPTMLTTDLSMRMDPAYEKISRRFHQNPDEFADAFARAWFKLTHRDMGPVSRYLGKLVPAEHLIWQDPVPAVDHKLIDAADIAALKAKLLATGIAPTRLALTAWASAATFRGSDKRGGANGARIRLAPQKDWAANEPAELAKVLAALEKVQAEFNAAATGGKKVSLADLIVLGGCAAIEAAAKAAGHDVTVPFTPGRTDATEAQTDVASFAVLEPKADGFRNYLGKGDPRAPEEQLIDRAQLMTLTAPEMTALIGGMRALGANVGGAKHGVFTTRPGALTNDFFVNLLDMNMSWHPAAEPGVYELRDRKSGAVKWTATRVDLVFGSNSQLRALAEVYGTQDGEAAFVKDFVAAWTKVMELDRFDLA.

A signal peptide spans 1-19 (MSTEAKCPVTGGATRSSSA). A disordered region spans residues 1-20 (MSTEAKCPVTGGATRSSSAG). Positions 96–219 (WHAAGTYRIG…LAAVQMGLIY (124 aa)) form a cross-link, tryptophyl-tyrosyl-methioninium (Trp-Tyr) (with M-245). His-97 acts as the Proton acceptor in catalysis. Residues 219-245 (YVNPEGPNGKPDPVAAARDIRETFARM) constitute a cross-link (tryptophyl-tyrosyl-methioninium (Tyr-Met) (with W-96)). His-260 is a binding site for heme b.

It belongs to the peroxidase family. Peroxidase/catalase subfamily. Homodimer or homotetramer. The cofactor is heme b. Formation of the three residue Trp-Tyr-Met cross-link is important for the catalase, but not the peroxidase activity of the enzyme.

The catalysed reaction is H2O2 + AH2 = A + 2 H2O. The enzyme catalyses 2 H2O2 = O2 + 2 H2O. Functionally, bifunctional enzyme with both catalase and broad-spectrum peroxidase activity. This chain is Catalase-peroxidase, found in Acidiphilium cryptum (strain JF-5).